The following is a 122-amino-acid chain: Large ribosomal subunit protein uL14 (122 aa).

The protein belongs to the universal ribosomal protein uL14 family. Part of the 50S ribosomal subunit. Forms a cluster with proteins L3 and L19. In the 70S ribosome, L14 and L19 interact and together make contacts with the 16S rRNA in bridges B5 and B8.

Binds to 23S rRNA. Forms part of two intersubunit bridges in the 70S ribosome. The protein is Large ribosomal subunit protein uL14 of Bradyrhizobium diazoefficiens (strain JCM 10833 / BCRC 13528 / IAM 13628 / NBRC 14792 / USDA 110).